The sequence spans 1394 residues: DNA-directed RNA polymerase subunit beta' (1394 aa).

The Zn(2+) site is built by Cys-70, Cys-72, Cys-85, and Cys-88. Mg(2+)-binding residues include Asp-470, Asp-472, and Asp-474. Zn(2+) contacts are provided by Cys-815, Cys-889, Cys-896, and Cys-899.

Belongs to the RNA polymerase beta' chain family. As to quaternary structure, the RNAP catalytic core consists of 2 alpha, 1 beta, 1 beta' and 1 omega subunit. When a sigma factor is associated with the core the holoenzyme is formed, which can initiate transcription. Mg(2+) serves as cofactor. The cofactor is Zn(2+).

The enzyme catalyses RNA(n) + a ribonucleoside 5'-triphosphate = RNA(n+1) + diphosphate. Its function is as follows. DNA-dependent RNA polymerase catalyzes the transcription of DNA into RNA using the four ribonucleoside triphosphates as substrates. The sequence is that of DNA-directed RNA polymerase subunit beta' from Anaeromyxobacter sp. (strain K).